The sequence spans 356 residues: Tetraacyldisaccharide 4'-kinase (356 aa).

51–58 serves as a coordination point for ATP; it reads GWGGSGKT.

This sequence belongs to the LpxK family.

The enzyme catalyses a lipid A disaccharide + ATP = a lipid IVA + ADP + H(+). The protein operates within glycolipid biosynthesis; lipid IV(A) biosynthesis; lipid IV(A) from (3R)-3-hydroxytetradecanoyl-[acyl-carrier-protein] and UDP-N-acetyl-alpha-D-glucosamine: step 6/6. In terms of biological role, transfers the gamma-phosphate of ATP to the 4'-position of a tetraacyldisaccharide 1-phosphate intermediate (termed DS-1-P) to form tetraacyldisaccharide 1,4'-bis-phosphate (lipid IVA). The chain is Tetraacyldisaccharide 4'-kinase from Oleidesulfovibrio alaskensis (strain ATCC BAA-1058 / DSM 17464 / G20) (Desulfovibrio alaskensis).